Reading from the N-terminus, the 656-residue chain is Receptor-type tyrosine-protein phosphatase R (656 aa).

A signal peptide spans 1 to 23 (MRRAVGFPALCLLLNLHAAGCFS). S23 is a glycosylation site (O-linked (Xyl...) (chondroitin sulfate) serine). Topologically, residues 25–225 (NNDHFLAIRQ…HEADKIWSKE (201 aa)) are extracellular. Residue N128 is glycosylated (N-linked (GlcNAc...) asparagine). The helical transmembrane segment at 226–248 (GFYAVVIFLSIFIIIVTCLMIIY) threads the bilayer. Over 249–656 (RLKERLQLSF…ESRLSPETVQ (408 aa)) the chain is Cytoplasmic. At S271 the chain carries Phosphoserine. S338 is modified (phosphoserine; by PKA). In terms of domain architecture, Tyrosine-protein phosphatase spans 392–646 (LQSEFMEIPM…EFVHHALCLF (255 aa)). Substrate is bound by residues D553, 587-593 (CSAGIGR), and Q631. C587 acts as the Phosphocysteine intermediate in catalysis.

This sequence belongs to the protein-tyrosine phosphatase family. Receptor class 7 subfamily. Interacts with MAPKs. As to expression, widely expressed in the brain, most abundant in cerebellum, midbrain, cerebral cortex and hippocampus. Also expressed in heart and skeletal muscle.

It is found in the cytoplasm. The protein resides in the cell membrane. The enzyme catalyses O-phospho-L-tyrosyl-[protein] + H2O = L-tyrosyl-[protein] + phosphate. Sequesters mitogen-activated protein kinases (MAPKs) such as MAPK1, MAPK3 and MAPK14 in the cytoplasm in an inactive form. The MAPKs bind to a dephosphorylated kinase interacting motif, phosphorylation of which by the protein kinase A complex releases the MAPKs for activation and translocation into the nucleus. The polypeptide is Receptor-type tyrosine-protein phosphatase R (Ptprr) (Rattus norvegicus (Rat)).